The chain runs to 713 residues: Cyclomaltodextrin glucanotransferase (713 aa).

Positions 1-27 are cleaved as a signal peptide; that stretch reads MKKISKLTTALALSLSLALSLLGPAHA. Residues 28 to 165 form an A1 region; it reads APDTSVSNKQ…NIKVIIDFAP (138 aa). Positions 54, 56, 59, and 60 each coordinate Ca(2+). Cysteine 70 and cysteine 77 are oxidised to a cystine. Residues glycine 78 and aspartate 80 each coordinate Ca(2+). Substrate is bound at residue 127 to 128; it reads YW. Position 166 (asparagine 166) interacts with Ca(2+). A b region spans residues 166–229; that stretch reads NHTSPASLDQ…NLYDLADLNH (64 aa). Histidine 167 contacts substrate. Isoleucine 217 provides a ligand contact to Ca(2+). 220 to 223 provides a ligand contact to substrate; that stretch reads NLYD. Aspartate 226 is a Ca(2+) binding site. Residues 230–433 form an A2 region; that stretch reads NNSTVDTYLK…LRKSNPAIAY (204 aa). Arginine 254 provides a ligand contact to substrate. Aspartate 256 functions as the Nucleophile in the catalytic mechanism. 259–260 is a binding site for substrate; the sequence is KH. Histidine 260 serves as a coordination point for Ca(2+). Residue glutamate 284 is the Proton donor of the active site. Positions 354, 398, and 402 each coordinate substrate. The tract at residues 434–522 is c; it reads GTTQERWINN…GTAVWQYTTA (89 aa). Residues 523–609 are d; sequence VTAPTIGHVG…SNVHDNFEVL (87 aa). Residues 526-607 enclose the IPT/TIG domain; it reads PTIGHVGPMM…TSSNVHDNFE (82 aa). One can recognise a CBM20 domain in the interval 608-713; it reads VLSGDQVSVR…TATINVNWQP (106 aa). The segment at 610 to 713 is e; sequence SGDQVSVRFV…TATINVNWQP (104 aa).

This sequence belongs to the glycosyl hydrolase 13 family. Monomer. The cofactor is Ca(2+).

Its subcellular location is the secreted. The enzyme catalyses Cyclizes part of a (1-&gt;4)-alpha-D-glucan chain by formation of a (1-&gt;4)-alpha-D-glucosidic bond.. The chain is Cyclomaltodextrin glucanotransferase (cgt) from Bacillus sp. (strain 17-1).